Reading from the N-terminus, the 200-residue chain is MAASQQQASATTSTASVSGPGSAGGSGPQQQPQPPAQLVGPAQSGLLQQQQQDFDPVQRYKMLIPQLKESLQTLMKVAAQNLIQNTNIDNGQKSSDGPIQRFDKCLEEFYALCDQLELCLRLAHECLSQSCDSAKHSPTLVPTATKPDAVQPDSLPYPQYLAVIKAQIACAKDIHTALLDCANKVTGKTPAPPTGPGGTL.

Low complexity-rich tracts occupy residues 1–20 (MAASQQQASATTSTASVSGP) and 36–48 (AQLVGPAQSGLLQ). The tract at residues 1-48 (MAASQQQASATTSTASVSGPGSAGGSGPQQQPQPPAQLVGPAQSGLLQ) is disordered. Ala-2 is modified (N-acetylalanine).

This sequence belongs to the Mediator complex subunit 29 family. Component of the TRAP/SMCC mediator complex. Interacts with MED20/TRFP. Associates with the MED18-MED20 heteromer.

The protein localises to the nucleus. In terms of biological role, component of the mediator complex, a complex that can either repress or activate transcription. Mediator complexes are essential for basal and regulated expression of nearly all RNA polymerase II-dependent genes. They may act as a bridge, conveying regulatory information from enhancers and other control elements to the promoter. The protein is Mediator of RNA polymerase II transcription subunit 29 (MED29) of Bos taurus (Bovine).